The sequence spans 314 residues: Beta-lactamase (314 aa).

Residues 1–39 (MHPSTSRPSRRTLLTATAGAALAAATLVPGTAHASSGGR) constitute a signal peptide (tat-type signal). The interval 31 to 50 (TAHASSGGRGHGSGSVSDAE) is disordered. S89 (acyl-ester intermediate) is an active-site residue. 259–261 (KTG) contributes to the substrate binding site.

It belongs to the class-A beta-lactamase family. Post-translationally, predicted to be exported by the Tat system. The position of the signal peptide cleavage has been experimentally proven.

It carries out the reaction a beta-lactam + H2O = a substituted beta-amino acid. The chain is Beta-lactamase from Streptomyces albus G.